The following is a 329-amino-acid chain: Peroxidase 51 (329 aa).

The first 25 residues, 1–25, serve as a signal peptide directing secretion; the sequence is MVVMNKTNLLLLILSLFLAINLSSA. Cystine bridges form between C36–C119, C69–C74, C125–C325, and C204–C236. H67 acts as the Proton acceptor in catalysis. Ca(2+)-binding residues include D68, V71, G73, D75, and S77. P167 serves as a coordination point for substrate. Heme b is bound at residue H197. T198 serves as a coordination point for Ca(2+). N215 carries an N-linked (GlcNAc...) asparagine glycan. Ca(2+) contacts are provided by D249, T252, and D257.

This sequence belongs to the peroxidase family. Classical plant (class III) peroxidase subfamily. The cofactor is heme b. Ca(2+) serves as cofactor.

It is found in the secreted. The catalysed reaction is 2 a phenolic donor + H2O2 = 2 a phenolic radical donor + 2 H2O. In terms of biological role, removal of H(2)O(2), oxidation of toxic reductants, biosynthesis and degradation of lignin, suberization, auxin catabolism, response to environmental stresses such as wounding, pathogen attack and oxidative stress. These functions might be dependent on each isozyme/isoform in each plant tissue. The polypeptide is Peroxidase 51 (PER51) (Arabidopsis thaliana (Mouse-ear cress)).